The primary structure comprises 264 residues: Apolipoprotein A-I (264 aa).

An N-terminal signal peptide occupies residues 1–18; that stretch reads MKAVVLAVAVLFLTGSQA. Repeat copies occupy residues 67–88 and 89–110. The 10 X approximate tandem repeats stretch occupies residues 67–264; sequence LNLLANWNTL…DQASKQLSAQ (198 aa). M109 bears the Methionine sulfoxide mark. The 3; half-length repeat unit spans residues 111–121; it reads KDLEEVKQKVQ. Repeat copies occupy residues 122-142, 144-165, 166-187, 188-208, and 209-229. A Methionine sulfoxide modification is found at M193. A 9; half-length repeat occupies 230–240; that stretch reads PALEDLRQGLM. The residue at position 240 (M240) is a Methionine sulfoxide. The stretch at 241–264 is repeat 10; it reads PVMESLKASFLSSIDQASKQLSAQ.

It belongs to the apolipoprotein A1/A4/E family. As to quaternary structure, homodimer. Interacts with APOA1BP and CLU. Component of a sperm activating protein complex (SPAP), consisting of APOA1, an immunoglobulin heavy chain, an immunoglobulin light chain and albumin. Interacts with NDRG1. Interacts with SCGB3A2. Interacts with NAXE and YJEFN3. Post-translationally, glycosylated. Palmitoylated. In terms of processing, phosphorylation sites are present in the extracellular medium. As to expression, major protein of plasma HDL, also found in chylomicrons.

The protein localises to the secreted. Functionally, participates in the reverse transport of cholesterol from tissues to the liver for excretion by promoting cholesterol efflux from tissues and by acting as a cofactor for the lecithin cholesterol acyltransferase (LCAT). As part of the SPAP complex, activates spermatozoa motility. The sequence is that of Apolipoprotein A-I (Apoa1) from Heterocephalus glaber (Naked mole rat).